Reading from the N-terminus, the 486-residue chain is Coronin-1B (486 aa).

Ser-2 bears the Phosphoserine; by PKC mark. WD repeat units lie at residues 80–120 (GHTG…LTSP), 130–170 (GHTK…ELYR), 174–213 (LHPD…LVAE), 217–260 (AHEG…EPMA), and 265–305 (DSSN…PYIH). The disordered stretch occupies residues 404–444 (LKVSRRNVLSDSRPTSAARPAAPAPAAPAPAAAASSSLSGA). Over residues 432 to 444 (APAAAASSSLSGA) the composition is skewed to low complexity. Residues 446–484 (EAGKLEEVMRELRALRALVKEQGERIGRLEEQLGRVENG) adopt a coiled-coil conformation.

This sequence belongs to the WD repeat coronin family. As to quaternary structure, forms homooligomers, but does not form complexes with the other coronins. Interacts with Arp2/3 complex components, including ACTR2, ARPC1B and ARPC2. Binds actin. Phosphorylated in vivo by PKC in response to cholinergic stimulation. Phosphorylation on Ser-2 regulates the interaction with the Arp2/3 complex and cell motility in fibroblasts. Phosphorylation does not seem to affect subcellular location.

Its subcellular location is the cytoplasm. The protein resides in the cytoskeleton. The protein localises to the stress fiber. Regulates leading edge dynamics and cell motility in fibroblasts. May be involved in cytokinesis and signal transduction. This Oryctolagus cuniculus (Rabbit) protein is Coronin-1B (CORO1B).